Consider the following 205-residue polypeptide: Pre-rRNA-processing protein TSR2 (205 aa).

A disordered region spans residues 144–205; sequence SKRVVHIEGD…LVQPKGRRKH (62 aa). Acidic residues predominate over residues 152–177; it reads GDDDEDDEDVEDYDDEDEDEEMDEVV.

Belongs to the TSR2 family. In terms of assembly, interacts with RPS26A.

The protein resides in the cytoplasm. It localises to the nucleus. In terms of biological role, required for 20S pre-rRNA processing. This chain is Pre-rRNA-processing protein TSR2, found in Saccharomyces cerevisiae (strain ATCC 204508 / S288c) (Baker's yeast).